Reading from the N-terminus, the 253-residue chain is ATP synthase subunit b 2 (253 aa).

A helical transmembrane segment spans residues Val9–Tyr27.

Belongs to the ATPase B chain family. F-type ATPases have 2 components, F(1) - the catalytic core - and F(0) - the membrane proton channel. F(1) has five subunits: alpha(3), beta(3), gamma(1), delta(1), epsilon(1). F(0) has three main subunits: a(1), b(2) and c(10-14). The alpha and beta chains form an alternating ring which encloses part of the gamma chain. F(1) is attached to F(0) by a central stalk formed by the gamma and epsilon chains, while a peripheral stalk is formed by the delta and b chains.

The protein localises to the cell inner membrane. Its function is as follows. F(1)F(0) ATP synthase produces ATP from ADP in the presence of a proton or sodium gradient. F-type ATPases consist of two structural domains, F(1) containing the extramembraneous catalytic core and F(0) containing the membrane proton channel, linked together by a central stalk and a peripheral stalk. During catalysis, ATP synthesis in the catalytic domain of F(1) is coupled via a rotary mechanism of the central stalk subunits to proton translocation. In terms of biological role, component of the F(0) channel, it forms part of the peripheral stalk, linking F(1) to F(0). This Methylococcus capsulatus (strain ATCC 33009 / NCIMB 11132 / Bath) protein is ATP synthase subunit b 2.